The sequence spans 252 residues: Type III pantothenate kinase (252 aa).

Position 6-13 (6-13 (DIGNTNIV)) interacts with ATP. A substrate-binding site is contributed by 107–110 (GADL). Asp-109 acts as the Proton acceptor in catalysis. Asp-129 is a binding site for K(+). Position 132 (Thr-132) interacts with ATP. Position 184 (Thr-184) interacts with substrate.

Belongs to the type III pantothenate kinase family. In terms of assembly, homodimer. Requires NH4(+) as cofactor. K(+) serves as cofactor.

The protein resides in the cytoplasm. It catalyses the reaction (R)-pantothenate + ATP = (R)-4'-phosphopantothenate + ADP + H(+). The protein operates within cofactor biosynthesis; coenzyme A biosynthesis; CoA from (R)-pantothenate: step 1/5. Catalyzes the phosphorylation of pantothenate (Pan), the first step in CoA biosynthesis. In Bifidobacterium animalis subsp. lactis (strain AD011), this protein is Type III pantothenate kinase.